The following is a 452-amino-acid chain: Keratin, type II cytoskeletal 80 (452 aa).

Residues 1-82 form a head region; that stretch reads MACRSCVVGF…DPAVQQLKNQ (82 aa). Ser45 carries the post-translational modification Phosphoserine. A coil 1A region spans residues 82 to 118; that stretch reads QEKEEMKALNDKFASLIGKVQALEQRNQLLETRWSFL. Positions 83–394 constitute an IF rod domain; the sequence is EKEEMKALND…KLVEGEEGRM (312 aa). The segment at 119–135 is linker 1; the sequence is QGQDSAIFDLGHLYEEY. Residues 136–227 form a coil 1B region; it reads QGRLQEELRK…TIYEQELKDL (92 aa). The linker 12 stretch occupies residues 228-251; it reads AAQVKDVSVTVGMDSRCHIDLSGI. A coil 2 region spans residues 252–390; that stretch reads VEEVKAQYDA…ATYRKLVEGE (139 aa). Residues 391 to 452 form a tail region; sequence EGRMDSPSAT…YFSQESEVSE (62 aa). The residue at position 396 (Ser396) is a Phosphoserine. Residues 412-434 form a disordered region; the sequence is AASRSGLSKAPSRKKKGSKGPVI.

It belongs to the intermediate filament family. In terms of assembly, heterotetramer of two type I and two type II keratins. As to expression, weakly expressed in tongue, but not skin or in any other tissues or organs examined.

In Homo sapiens (Human), this protein is Keratin, type II cytoskeletal 80 (KRT80).